The following is a 156-amino-acid chain: ATP synthase subunit b (156 aa).

The chain crosses the membrane as a helical span at residues 11–31; sequence AIAFAIFVMFCMKFVWPPLIG.

The protein belongs to the ATPase B chain family. As to quaternary structure, F-type ATPases have 2 components, F(1) - the catalytic core - and F(0) - the membrane proton channel. F(1) has five subunits: alpha(3), beta(3), gamma(1), delta(1), epsilon(1). F(0) has three main subunits: a(1), b(2) and c(10-14). The alpha and beta chains form an alternating ring which encloses part of the gamma chain. F(1) is attached to F(0) by a central stalk formed by the gamma and epsilon chains, while a peripheral stalk is formed by the delta and b chains.

It is found in the cell inner membrane. Its function is as follows. F(1)F(0) ATP synthase produces ATP from ADP in the presence of a proton or sodium gradient. F-type ATPases consist of two structural domains, F(1) containing the extramembraneous catalytic core and F(0) containing the membrane proton channel, linked together by a central stalk and a peripheral stalk. During catalysis, ATP synthesis in the catalytic domain of F(1) is coupled via a rotary mechanism of the central stalk subunits to proton translocation. Functionally, component of the F(0) channel, it forms part of the peripheral stalk, linking F(1) to F(0). This chain is ATP synthase subunit b, found in Psychrobacter cryohalolentis (strain ATCC BAA-1226 / DSM 17306 / VKM B-2378 / K5).